The sequence spans 286 residues: 4-hydroxy-tetrahydrodipicolinate synthase (286 aa).

Thr42 contributes to the pyruvate binding site. Residue Tyr129 is the Proton donor/acceptor of the active site. The active-site Schiff-base intermediate with substrate is Lys157. A pyruvate-binding site is contributed by Val196.

This sequence belongs to the DapA family. In terms of assembly, homotetramer; dimer of dimers.

It localises to the cytoplasm. It carries out the reaction L-aspartate 4-semialdehyde + pyruvate = (2S,4S)-4-hydroxy-2,3,4,5-tetrahydrodipicolinate + H2O + H(+). It functions in the pathway amino-acid biosynthesis; L-lysine biosynthesis via DAP pathway; (S)-tetrahydrodipicolinate from L-aspartate: step 3/4. Its function is as follows. Catalyzes the condensation of (S)-aspartate-beta-semialdehyde [(S)-ASA] and pyruvate to 4-hydroxy-tetrahydrodipicolinate (HTPA). The sequence is that of 4-hydroxy-tetrahydrodipicolinate synthase from Chlamydia muridarum (strain MoPn / Nigg).